We begin with the raw amino-acid sequence, 324 residues long: Rho crystallin (324 aa).

The residue at position 2 (threonine 2) is an N-acetylthreonine. Residue 218–281 (SVLGSHRDRN…SFTPARIKQN (64 aa)) participates in NADP(+) binding.

This sequence belongs to the aldo/keto reductase family. In terms of assembly, monomer.

This chain is Rho crystallin, found in Rana temporaria (European common frog).